Consider the following 395-residue polypeptide: Demethylmacrocin O-methyltransferase (395 aa).

It catalyses the reaction demethylmacrocin + S-adenosyl-L-methionine = macrocin + S-adenosyl-L-homocysteine + H(+). It functions in the pathway antibiotic biosynthesis; tylosin biosynthesis. In terms of biological role, O-methyltransferase that catalyzes the conversion of demethylmacrocin to macrocin, the penultimate step of tylosin antibiotic biosynthesis. Also able to mediate the conversion of demethyllactenocin to lactenocin. This Streptomyces fradiae (Streptomyces roseoflavus) protein is Demethylmacrocin O-methyltransferase (tylE).